A 733-amino-acid chain; its full sequence is Methionine--tRNA ligase (733 aa).

Residues 11–21 carry the 'HIGH' region motif; sequence PYANGPIHAGH. Zn(2+) contacts are provided by cysteine 143, cysteine 146, cysteine 156, and cysteine 159. The 'KMSKS' region motif lies at 345–349; that stretch reads KFSTS. Threonine 348 contacts ATP. Residues 633–733 form the tRNA-binding domain; it reads DFMKLDLRVG…KEVKLGARIR (101 aa).

It belongs to the class-I aminoacyl-tRNA synthetase family. MetG type 1 subfamily. Homodimer. Zn(2+) serves as cofactor.

The protein resides in the cytoplasm. The catalysed reaction is tRNA(Met) + L-methionine + ATP = L-methionyl-tRNA(Met) + AMP + diphosphate. Its function is as follows. Is required not only for elongation of protein synthesis but also for the initiation of all mRNA translation through initiator tRNA(fMet) aminoacylation. This chain is Methionine--tRNA ligase, found in Thermococcus onnurineus (strain NA1).